Here is a 381-residue protein sequence, read N- to C-terminus: Cytochrome b (381 aa).

4 consecutive transmembrane segments (helical) span residues 33–53 (FGSLLGICLIIQILTGLFLAM), 77–98 (WLLRNLHANGASMFFMCLFLHV), 113–133 (WNIGVILLLTVMATAFVGYVL), and 178–198 (FFAFHFILPFIIVAFAAVHLL). Positions 83 and 97 each coordinate heme b. Heme b contacts are provided by H182 and H196. H201 contributes to the a ubiquinone binding site. Helical transmembrane passes span 226–246 (IKDALGLIFLILSLLLLGLFS), 288–308 (LGGVLALLASILILLIIPLLH), 320–340 (IFQTLFWILTADLITLTWIGG), and 347–367 (FIIIGQLALMLYFLLILALMP).

This sequence belongs to the cytochrome b family. In terms of assembly, the cytochrome bc1 complex contains 11 subunits: 3 respiratory subunits (MT-CYB, CYC1 and UQCRFS1), 2 core proteins (UQCRC1 and UQCRC2) and 6 low-molecular weight proteins (UQCRH/QCR6, UQCRB/QCR7, UQCRQ/QCR8, UQCR10/QCR9, UQCR11/QCR10 and a cleavage product of UQCRFS1). This cytochrome bc1 complex then forms a dimer. Heme b is required as a cofactor.

Its subcellular location is the mitochondrion inner membrane. In terms of biological role, component of the ubiquinol-cytochrome c reductase complex (complex III or cytochrome b-c1 complex) that is part of the mitochondrial respiratory chain. The b-c1 complex mediates electron transfer from ubiquinol to cytochrome c. Contributes to the generation of a proton gradient across the mitochondrial membrane that is then used for ATP synthesis. The protein is Cytochrome b (MT-CYB) of Dasykaluta rosamondae (Little red marsupial mouse).